A 293-amino-acid chain; its full sequence is Phosphatidylglycerol--prolipoprotein diacylglyceryl transferase (293 aa).

A run of 4 helical transmembrane segments spans residues 45–65 (FELR…YFVA), 81–101 (ELIF…YVLF), 115–135 (IWEG…TGFL), and 144–164 (FTFL…QAIG). Arginine 165 provides a ligand contact to a 1,2-diacyl-sn-glycero-3-phospho-(1'-sn-glycerol). A run of 3 helical transmembrane segments spans residues 204 to 224 (PTFL…SVYF), 231 to 249 (HGEV…RIVI), and 262 to 282 (IKAA…GFLI).

The protein belongs to the Lgt family.

It is found in the cell inner membrane. The enzyme catalyses L-cysteinyl-[prolipoprotein] + a 1,2-diacyl-sn-glycero-3-phospho-(1'-sn-glycerol) = an S-1,2-diacyl-sn-glyceryl-L-cysteinyl-[prolipoprotein] + sn-glycerol 1-phosphate + H(+). It participates in protein modification; lipoprotein biosynthesis (diacylglyceryl transfer). In terms of biological role, catalyzes the transfer of the diacylglyceryl group from phosphatidylglycerol to the sulfhydryl group of the N-terminal cysteine of a prolipoprotein, the first step in the formation of mature lipoproteins. The protein is Phosphatidylglycerol--prolipoprotein diacylglyceryl transferase of Thermotoga maritima (strain ATCC 43589 / DSM 3109 / JCM 10099 / NBRC 100826 / MSB8).